Consider the following 299-residue polypeptide: Phosphatidylserine decarboxylase proenzyme (299 aa).

Residues D90, H147, and S254 each act as charge relay system; for autoendoproteolytic cleavage activity in the active site. Catalysis depends on S254, which acts as the Schiff-base intermediate with substrate; via pyruvic acid; for decarboxylase activity. Position 254 is a pyruvic acid (Ser); by autocatalysis (S254).

The protein belongs to the phosphatidylserine decarboxylase family. PSD-B subfamily. Prokaryotic type I sub-subfamily. Heterodimer of a large membrane-associated beta subunit and a small pyruvoyl-containing alpha subunit. Pyruvate is required as a cofactor. Is synthesized initially as an inactive proenzyme. Formation of the active enzyme involves a self-maturation process in which the active site pyruvoyl group is generated from an internal serine residue via an autocatalytic post-translational modification. Two non-identical subunits are generated from the proenzyme in this reaction, and the pyruvate is formed at the N-terminus of the alpha chain, which is derived from the carboxyl end of the proenzyme. The autoendoproteolytic cleavage occurs by a canonical serine protease mechanism, in which the side chain hydroxyl group of the serine supplies its oxygen atom to form the C-terminus of the beta chain, while the remainder of the serine residue undergoes an oxidative deamination to produce ammonia and the pyruvoyl prosthetic group on the alpha chain. During this reaction, the Ser that is part of the protease active site of the proenzyme becomes the pyruvoyl prosthetic group, which constitutes an essential element of the active site of the mature decarboxylase.

Its subcellular location is the cell membrane. The enzyme catalyses a 1,2-diacyl-sn-glycero-3-phospho-L-serine + H(+) = a 1,2-diacyl-sn-glycero-3-phosphoethanolamine + CO2. It participates in phospholipid metabolism; phosphatidylethanolamine biosynthesis; phosphatidylethanolamine from CDP-diacylglycerol: step 2/2. Functionally, catalyzes the formation of phosphatidylethanolamine (PtdEtn) from phosphatidylserine (PtdSer). This chain is Phosphatidylserine decarboxylase proenzyme, found in Erwinia tasmaniensis (strain DSM 17950 / CFBP 7177 / CIP 109463 / NCPPB 4357 / Et1/99).